Consider the following 779-residue polypeptide: Phosphoribosylformylglycinamidine synthase subunit PurL (779 aa).

The active site involves histidine 52. The ATP site is built by tyrosine 55 and lysine 94. Residue glutamate 96 coordinates Mg(2+). Residues 97-100 (SHNH) and arginine 119 contribute to the substrate site. Histidine 98 functions as the Proton acceptor in the catalytic mechanism. Residue aspartate 120 participates in Mg(2+) binding. Substrate is bound at residue glutamine 243. Aspartate 271 is a Mg(2+) binding site. Residue 315–317 (ESQ) participates in substrate binding. Residues asparagine 523 and glycine 560 each coordinate ATP. Asparagine 561 is a binding site for Mg(2+). Substrate is bound at residue serine 563.

Belongs to the FGAMS family. As to quaternary structure, monomer. Part of the FGAM synthase complex composed of 1 PurL, 1 PurQ and 2 PurS subunits.

The protein resides in the cytoplasm. The enzyme catalyses N(2)-formyl-N(1)-(5-phospho-beta-D-ribosyl)glycinamide + L-glutamine + ATP + H2O = 2-formamido-N(1)-(5-O-phospho-beta-D-ribosyl)acetamidine + L-glutamate + ADP + phosphate + H(+). Its pathway is purine metabolism; IMP biosynthesis via de novo pathway; 5-amino-1-(5-phospho-D-ribosyl)imidazole from N(2)-formyl-N(1)-(5-phospho-D-ribosyl)glycinamide: step 1/2. Part of the phosphoribosylformylglycinamidine synthase complex involved in the purines biosynthetic pathway. Catalyzes the ATP-dependent conversion of formylglycinamide ribonucleotide (FGAR) and glutamine to yield formylglycinamidine ribonucleotide (FGAM) and glutamate. The FGAM synthase complex is composed of three subunits. PurQ produces an ammonia molecule by converting glutamine to glutamate. PurL transfers the ammonia molecule to FGAR to form FGAM in an ATP-dependent manner. PurS interacts with PurQ and PurL and is thought to assist in the transfer of the ammonia molecule from PurQ to PurL. The polypeptide is Phosphoribosylformylglycinamidine synthase subunit PurL (Prochlorococcus marinus (strain AS9601)).